We begin with the raw amino-acid sequence, 86 residues long: Protein K3 homolog (86 aa).

Residues 15 to 86 (NINDITQGII…LKGYIDVSIV (72 aa)) form the S1 motif domain.

This sequence belongs to the poxviridae K3 protein family. As to quaternary structure, interacts with host PKR kinase.

In terms of biological role, viral mimic of eIF-2-alpha that acts as a pseudosubstrate for EIF2AK2/PKR kinase. Inhibits therefore eIF-2-alpha phosphorylation by host EIF2AK2/PKR kinase and prevents protein synthesis shutoff. The protein is Protein K3 homolog of Sus scrofa (Pig).